We begin with the raw amino-acid sequence, 132 residues long: Small ribosomal subunit protein uS11 (132 aa).

This sequence belongs to the universal ribosomal protein uS11 family. As to quaternary structure, part of the 30S ribosomal subunit. Interacts with proteins S7 and S18. Binds to IF-3.

Functionally, located on the platform of the 30S subunit, it bridges several disparate RNA helices of the 16S rRNA. Forms part of the Shine-Dalgarno cleft in the 70S ribosome. In Chlamydia felis (strain Fe/C-56) (Chlamydophila felis), this protein is Small ribosomal subunit protein uS11.